The sequence spans 133 residues: MNRRKSREVAMKLLFEMSINKEEFSEILKNFKENTDTNMENVDFIYINKIVNGIEQNKEDIDKKIEENLTKWKLNRLSKIDLTILRISTYEIMFMEDIPNKVAVNEAIELAKKYSADNSPAFVNGVLGNMIKA.

It belongs to the NusB family.

Functionally, involved in transcription antitermination. Required for transcription of ribosomal RNA (rRNA) genes. Binds specifically to the boxA antiterminator sequence of the ribosomal RNA (rrn) operons. The sequence is that of Transcription antitermination protein NusB from Clostridium novyi (strain NT).